We begin with the raw amino-acid sequence, 312 residues long: Putative HTH-type transcriptional regulatory protein Ta1363 (312 aa).

The region spanning 133-186 (LREMRMKMSLSIGYLSHYLGVSRRSVSLYENGSSATIDVFLKLQEIIKSDLVDH) is the HTH cro/C1-type domain. Positions 144–163 (IGYLSHYLGVSRRSVSLYEN) form a DNA-binding region, H-T-H motif.

This Thermoplasma acidophilum (strain ATCC 25905 / DSM 1728 / JCM 9062 / NBRC 15155 / AMRC-C165) protein is Putative HTH-type transcriptional regulatory protein Ta1363.